The following is a 118-amino-acid chain: MAGRSGDSDEDLLKAVRLIKFLYQSSSDPPPNPGGTRQARRNRRRRWRERQRQIHSISERILSTYLGRSAKPVPLQLPPLERLTLDCNEDCGTSGTQGVGSPQILVESPTVLESGTKE.

Phosphoserine; by host CK2 is present on residues Ser-5 and Ser-8. The homomultimerization stretch occupies residues 18-28 (LIKFLYQSSSD). A disordered region spans residues 23–52 (YQSSSDPPPNPGGTRQARRNRRRRWRERQR). Residues 36–52 (TRQARRNRRRRWRERQR) carry the Nuclear localization signal and RNA-binding (RRE) motif. Basic residues predominate over residues 38-49 (QARRNRRRRWRE). The short motif at 75 to 86 (LQLPPLERLTLD) is the Nuclear export signal and binding to XPO1 element. The tract at residues 92–118 (GTSGTQGVGSPQILVESPTVLESGTKE) is disordered. 2 positions are modified to phosphoserine; by host: Ser-94 and Ser-101.

This sequence belongs to the HIV-1 REV protein family. In terms of assembly, homomultimer; when bound to the RRE. Multimeric assembly is essential for activity and may involve XPO1. Binds to human KPNB1, XPO1, TNPO1, RANBP5 and IPO7. Interacts with the viral Integrase. Interacts with human KHDRBS1. Interacts with human NAP1; this interaction decreases Rev multimerization and stimulates its activity. Interacts with human DEAD-box helicases DDX3 and DDX24; these interactions may serve for viral RNA export to the cytoplasm and packaging, respectively. Interacts with human PSIP1; this interaction may inhibit HIV-1 DNA integration by promoting dissociation of the Integrase-LEDGF/p75 complex. In terms of processing, asymmetrically arginine dimethylated at one site by host PRMT6. Methylation impairs the RNA-binding activity and export of viral RNA from the nucleus to the cytoplasm. Post-translationally, phosphorylated by protein kinase CK2. Presence of, and maybe binding to the N-terminus of the regulatory beta subunit of CK2 is necessary for CK2-mediated Rev's phosphorylation.

It is found in the host nucleus. The protein localises to the host nucleolus. It localises to the host cytoplasm. In terms of biological role, escorts unspliced or incompletely spliced viral pre-mRNAs (late transcripts) out of the nucleus of infected cells. These pre-mRNAs carry a recognition sequence called Rev responsive element (RRE) located in the env gene, that is not present in fully spliced viral mRNAs (early transcripts). This function is essential since most viral proteins are translated from unspliced or partially spliced pre-mRNAs which cannot exit the nucleus by the pathway used by fully processed cellular mRNAs. Rev itself is translated from a fully spliced mRNA that readily exits the nucleus. Rev's nuclear localization signal (NLS) binds directly to KPNB1/Importin beta-1 without previous binding to KPNA1/Importin alpha-1. KPNB1 binds to the GDP bound form of RAN (Ran-GDP) and targets Rev to the nucleus. In the nucleus, the conversion from Ran-GDP to Ran-GTP dissociates Rev from KPNB1 and allows Rev's binding to the RRE in viral pre-mRNAs. Rev multimerization on the RRE via cooperative assembly exposes its nuclear export signal (NES) to the surface. Rev can then form a complex with XPO1/CRM1 and Ran-GTP, leading to nuclear export of the complex. Conversion from Ran-GTP to Ran-GDP mediates dissociation of the Rev/RRE/XPO1/RAN complex, so that Rev can return to the nucleus for a subsequent round of export. Beside KPNB1, also seems to interact with TNPO1/Transportin-1, RANBP5/IPO5 and IPO7/RANBP7 for nuclear import. The nucleoporin-like HRB/RIP is an essential cofactor that probably indirectly interacts with Rev to release HIV RNAs from the perinuclear region to the cytoplasm. This is Protein Rev from Human immunodeficiency virus type 1 group M subtype B (isolate LW123) (HIV-1).